The following is a 521-amino-acid chain: Protein disulfide-isomerase A5 (521 aa).

An N-terminal signal peptide occupies residues 1–25; that stretch reads MARVVPAWLLLPLAVWVVLPTWLSS. Thioredoxin domains are found at residues 136-263, 274-386, and 387-508; these read FLKD…NPQP, ADEG…NPES, and PPPP…TLRE. Cystine bridges form between Cys-184/Cys-187, Cys-307/Cys-310, and Cys-428/Cys-431. The short motif at 518–521 is the Prevents secretion from ER element; that stretch reads KEEL.

Belongs to the protein disulfide isomerase family.

It localises to the endoplasmic reticulum lumen. It carries out the reaction Catalyzes the rearrangement of -S-S- bonds in proteins.. This Bos taurus (Bovine) protein is Protein disulfide-isomerase A5 (PDIA5).